The following is a 567-amino-acid chain: Phenylalanine--tRNA ligase beta subunit (567 aa).

A B5 domain is found at 287–362 (YFQEEVEFNV…IGEGLASFHP (76 aa)). Mg(2+) contacts are provided by aspartate 340, aspartate 346, glutamate 349, and aspartate 350.

Belongs to the phenylalanyl-tRNA synthetase beta subunit family. Type 2 subfamily. Tetramer of two alpha and two beta subunits. Mg(2+) serves as cofactor.

The protein resides in the cytoplasm. The enzyme catalyses tRNA(Phe) + L-phenylalanine + ATP = L-phenylalanyl-tRNA(Phe) + AMP + diphosphate + H(+). The protein is Phenylalanine--tRNA ligase beta subunit of Borreliella afzelii (strain PKo) (Borrelia afzelii).